Consider the following 375-residue polypeptide: Dihydroorotate dehydrogenase (quinone) (375 aa).

Residues 78–82 (AGLDK) and Thr-102 each bind FMN. Lys-82 contributes to the substrate binding site. Substrate is bound at residue 127–131 (NRMGF). Residues Asn-159 and Asn-192 each coordinate FMN. Asn-192 contacts substrate. Ser-195 serves as the catalytic Nucleophile. Asn-197 lines the substrate pocket. The FMN site is built by Lys-230 and Thr-258. 259-260 (NT) is a binding site for substrate. FMN contacts are provided by residues Gly-288, Gly-317, and 338 to 339 (YT).

The protein belongs to the dihydroorotate dehydrogenase family. Type 2 subfamily. As to quaternary structure, monomer. The cofactor is FMN.

It localises to the cell membrane. The catalysed reaction is (S)-dihydroorotate + a quinone = orotate + a quinol. It participates in pyrimidine metabolism; UMP biosynthesis via de novo pathway; orotate from (S)-dihydroorotate (quinone route): step 1/1. Its function is as follows. Catalyzes the conversion of dihydroorotate to orotate with quinone as electron acceptor. The chain is Dihydroorotate dehydrogenase (quinone) from Cyanothece sp. (strain PCC 7425 / ATCC 29141).